The sequence spans 251 residues: Small ribosomal subunit protein uS2 (251 aa).

The protein belongs to the universal ribosomal protein uS2 family.

The sequence is that of Small ribosomal subunit protein uS2 from Chlorobium chlorochromatii (strain CaD3).